The following is a 360-amino-acid chain: Peptide chain release factor 1 (360 aa).

The residue at position 235 (glutamine 235) is an N5-methylglutamine.

Belongs to the prokaryotic/mitochondrial release factor family. Methylated by PrmC. Methylation increases the termination efficiency of RF1.

The protein localises to the cytoplasm. Functionally, peptide chain release factor 1 directs the termination of translation in response to the peptide chain termination codons UAG and UAA. This is Peptide chain release factor 1 from Blochmanniella pennsylvanica (strain BPEN).